Here is a 365-residue protein sequence, read N- to C-terminus: tRNA/tmRNA (uracil-C(5))-methyltransferase (365 aa).

S-adenosyl-L-methionine contacts are provided by Gln-189, Tyr-217, Asn-222, Glu-238, and Asp-298. Residue Cys-323 is the Nucleophile of the active site. Glu-357 serves as the catalytic Proton acceptor.

This sequence belongs to the class I-like SAM-binding methyltransferase superfamily. RNA M5U methyltransferase family. TrmA subfamily.

It catalyses the reaction uridine(54) in tRNA + S-adenosyl-L-methionine = 5-methyluridine(54) in tRNA + S-adenosyl-L-homocysteine + H(+). The catalysed reaction is uridine(341) in tmRNA + S-adenosyl-L-methionine = 5-methyluridine(341) in tmRNA + S-adenosyl-L-homocysteine + H(+). Dual-specificity methyltransferase that catalyzes the formation of 5-methyluridine at position 54 (m5U54) in all tRNAs, and that of position 341 (m5U341) in tmRNA (transfer-mRNA). The polypeptide is tRNA/tmRNA (uracil-C(5))-methyltransferase (Saccharophagus degradans (strain 2-40 / ATCC 43961 / DSM 17024)).